Consider the following 802-residue polypeptide: Copper-exporting P-type ATPase (802 aa).

HMA domains follow at residues 5-70 (KKTT…YGVA) and 72-138 (ETVE…YDAS). Cu(+) contacts are provided by C16, C19, C83, and C86. 6 consecutive transmembrane segments (helical) span residues 161 to 181 (LIISAVLSLPLLMLMFVHLFN), 192 to 212 (WFQFILATPVQFIIGWQFYVG), 224 to 244 (MDVLVAVGTSAAYFYSIYEMV), 256 to 276 (LYFETSAVLITLILFGKYLEA), 411 to 431 (YFVPIVVGIALLTFIVWITLV), and 438 to 458 (PALVASISVLVIACPCALGLA). Residue D495 is the 4-aspartylphosphate intermediate of the active site. Mg(2+) contacts are provided by D690 and D694. 2 helical membrane-spanning segments follow: residues 748–767 (LFWAFGYNIAGIPIAALGLL) and 771–790 (VAGAAMALSSVSVVTNALRL).

Belongs to the cation transport ATPase (P-type) (TC 3.A.3) family. Type IB subfamily.

The protein localises to the cell membrane. The enzyme catalyses Cu(+)(in) + ATP + H2O = Cu(+)(out) + ADP + phosphate + H(+). Its function is as follows. Involved in copper export. This chain is Copper-exporting P-type ATPase (copA), found in Staphylococcus aureus (strain MRSA252).